Here is a 156-residue protein sequence, read N- to C-terminus: ATP synthase subunit b (156 aa).

A helical transmembrane segment spans residues 7-27 (LFAQMVVFLILAWFTMKFVWP).

This sequence belongs to the ATPase B chain family. F-type ATPases have 2 components, F(1) - the catalytic core - and F(0) - the membrane proton channel. F(1) has five subunits: alpha(3), beta(3), gamma(1), delta(1), epsilon(1). F(0) has three main subunits: a(1), b(2) and c(10-14). The alpha and beta chains form an alternating ring which encloses part of the gamma chain. F(1) is attached to F(0) by a central stalk formed by the gamma and epsilon chains, while a peripheral stalk is formed by the delta and b chains.

The protein resides in the cell inner membrane. F(1)F(0) ATP synthase produces ATP from ADP in the presence of a proton or sodium gradient. F-type ATPases consist of two structural domains, F(1) containing the extramembraneous catalytic core and F(0) containing the membrane proton channel, linked together by a central stalk and a peripheral stalk. During catalysis, ATP synthesis in the catalytic domain of F(1) is coupled via a rotary mechanism of the central stalk subunits to proton translocation. Functionally, component of the F(0) channel, it forms part of the peripheral stalk, linking F(1) to F(0). The sequence is that of ATP synthase subunit b from Paraburkholderia phytofirmans (strain DSM 17436 / LMG 22146 / PsJN) (Burkholderia phytofirmans).